We begin with the raw amino-acid sequence, 199 residues long: Transmembrane protein 223 (199 aa).

The Mitochondrial matrix segment spans residues 1-43; sequence MVASVPLRNVSHLLSVLRSQNVPRYLQNGVPRDVLLFRHERGR. A helical membrane pass occupies residues 44–64; that stretch reads FFAILGLFCAGQGIFWTSLAV. Residues 65–94 are Mitochondrial intermembrane-facing; it reads AALSRPLSRVPAEAPNRSYQDLRSALWRYG. A helical transmembrane segment spans residues 95-115; the sequence is LAVGCGTMGVLVLGAGLLYSL. At 116–199 the chain is on the mitochondrial matrix side; the sequence is RSVRSVMLLA…DNTVGAYRSL (84 aa).

The protein belongs to the TMEM223 family. Associates with the mitochondrial ribosome.

The protein localises to the mitochondrion inner membrane. Functionally, mitochondrial ribosome-associated protein involved in the first steps of cytochrome c oxidase complex (complex IV) biogenesis. Stimulates the translation of MT-CO1 mRNA and is a constituent of early MT-CO1 assembly intermediates. The polypeptide is Transmembrane protein 223 (Mus musculus (Mouse)).